The sequence spans 289 residues: ATP synthase subunit a (289 aa).

The next 6 helical transmembrane spans lie at 43 to 63 (AFHLDTLGWSVALGLIFLFIF), 103 to 123 (VIAPLALTIFVWVFLMNAVDL), 160 to 180 (FCVFALIIFYSIKVKGLGGFI), 193 to 213 (IFVQILLIPVNFLLEFVTLIA), 232 to 252 (VFILIAVMFGSGLLWLSGLGV), and 259 to 279 (AVFHILIITLQAFIFMMLTIV).

Belongs to the ATPase A chain family. In terms of assembly, F-type ATPases have 2 components, CF(1) - the catalytic core - and CF(0) - the membrane proton channel. CF(1) has five subunits: alpha(3), beta(3), gamma(1), delta(1), epsilon(1). CF(0) has three main subunits: a(1), b(2) and c(9-12). The alpha and beta chains form an alternating ring which encloses part of the gamma chain. CF(1) is attached to CF(0) by a central stalk formed by the gamma and epsilon chains, while a peripheral stalk is formed by the delta and b chains.

The protein resides in the cell inner membrane. Key component of the proton channel; it plays a direct role in the translocation of protons across the membrane. This is ATP synthase subunit a from Pseudomonas putida (strain GB-1).